The primary structure comprises 805 residues: Leucine--tRNA ligase (805 aa).

The 'HIGH' region signature appears at 40-51; sequence PYPSGAGLHVGH. The short motif at 576–580 is the 'KMSKS' region element; sequence KMSKS. K579 lines the ATP pocket.

The protein belongs to the class-I aminoacyl-tRNA synthetase family.

The protein localises to the cytoplasm. It catalyses the reaction tRNA(Leu) + L-leucine + ATP = L-leucyl-tRNA(Leu) + AMP + diphosphate. This chain is Leucine--tRNA ligase, found in Geobacillus kaustophilus (strain HTA426).